Here is a 374-residue protein sequence, read N- to C-terminus: Queuine tRNA-ribosyltransferase (374 aa).

The active-site Proton acceptor is the D89. Substrate is bound by residues 89–93 (DSGGF), D143, Q187, and G214. Residues 245 to 251 (GVGKPED) are RNA binding. Catalysis depends on D264, which acts as the Nucleophile. Residues 269–273 (TRNAR) are RNA binding; important for wobble base 34 recognition. 4 residues coordinate Zn(2+): C302, C304, C307, and H333.

Belongs to the queuine tRNA-ribosyltransferase family. As to quaternary structure, homodimer. Within each dimer, one monomer is responsible for RNA recognition and catalysis, while the other monomer binds to the replacement base PreQ1. It depends on Zn(2+) as a cofactor.

The catalysed reaction is 7-aminomethyl-7-carbaguanine + guanosine(34) in tRNA = 7-aminomethyl-7-carbaguanosine(34) in tRNA + guanine. It functions in the pathway tRNA modification; tRNA-queuosine biosynthesis. Catalyzes the base-exchange of a guanine (G) residue with the queuine precursor 7-aminomethyl-7-deazaguanine (PreQ1) at position 34 (anticodon wobble position) in tRNAs with GU(N) anticodons (tRNA-Asp, -Asn, -His and -Tyr). Catalysis occurs through a double-displacement mechanism. The nucleophile active site attacks the C1' of nucleotide 34 to detach the guanine base from the RNA, forming a covalent enzyme-RNA intermediate. The proton acceptor active site deprotonates the incoming PreQ1, allowing a nucleophilic attack on the C1' of the ribose to form the product. After dissociation, two additional enzymatic reactions on the tRNA convert PreQ1 to queuine (Q), resulting in the hypermodified nucleoside queuosine (7-(((4,5-cis-dihydroxy-2-cyclopenten-1-yl)amino)methyl)-7-deazaguanosine). The sequence is that of Queuine tRNA-ribosyltransferase from Shewanella frigidimarina (strain NCIMB 400).